The following is a 338-amino-acid chain: Glycerol-3-phosphate dehydrogenase [NAD(P)+] (338 aa).

Residues Ser-14, Tyr-15, His-35, and Lys-109 each coordinate NADPH. Sn-glycerol 3-phosphate contacts are provided by Lys-109, Gly-138, and Thr-140. Residue Ala-142 participates in NADPH binding. Residues Lys-194, Asp-247, Ser-257, Arg-258, and Asn-259 each coordinate sn-glycerol 3-phosphate. Lys-194 serves as the catalytic Proton acceptor. Arg-258 serves as a coordination point for NADPH. Positions 282 and 284 each coordinate NADPH.

Belongs to the NAD-dependent glycerol-3-phosphate dehydrogenase family.

Its subcellular location is the cytoplasm. The catalysed reaction is sn-glycerol 3-phosphate + NAD(+) = dihydroxyacetone phosphate + NADH + H(+). It catalyses the reaction sn-glycerol 3-phosphate + NADP(+) = dihydroxyacetone phosphate + NADPH + H(+). Its pathway is membrane lipid metabolism; glycerophospholipid metabolism. Functionally, catalyzes the reduction of the glycolytic intermediate dihydroxyacetone phosphate (DHAP) to sn-glycerol 3-phosphate (G3P), the key precursor for phospholipid synthesis. This chain is Glycerol-3-phosphate dehydrogenase [NAD(P)+], found in Shewanella baltica (strain OS195).